A 256-amino-acid polypeptide reads, in one-letter code: MSNLTARVIPCLDIKDGRVVKGVNFVNLVDAGDPVESAAIYEENLADELCFLDITASSDRREILLHLVERIAEKIFIPFTVGGGIRTVDDVKAVLEKGADKVSINTAAFQNPKLLTYSSEIYGSQCIVCAIDVKHEKERDRYEVFLHGGRTATGREALDWAQEAAEKGAGEILLTSMDRDGTRNGFDIHLLKNFSSSLGIPIIASGGAGNPEHMVEAILRGKADAVLAASIFHFGEYSIRETKKAMEEMGISVRLD.

Catalysis depends on residues Asp13 and Asp132.

Belongs to the HisA/HisF family. Heterodimer of HisH and HisF.

The protein localises to the cytoplasm. It carries out the reaction 5-[(5-phospho-1-deoxy-D-ribulos-1-ylimino)methylamino]-1-(5-phospho-beta-D-ribosyl)imidazole-4-carboxamide + L-glutamine = D-erythro-1-(imidazol-4-yl)glycerol 3-phosphate + 5-amino-1-(5-phospho-beta-D-ribosyl)imidazole-4-carboxamide + L-glutamate + H(+). It functions in the pathway amino-acid biosynthesis; L-histidine biosynthesis; L-histidine from 5-phospho-alpha-D-ribose 1-diphosphate: step 5/9. Functionally, IGPS catalyzes the conversion of PRFAR and glutamine to IGP, AICAR and glutamate. The HisF subunit catalyzes the cyclization activity that produces IGP and AICAR from PRFAR using the ammonia provided by the HisH subunit. The sequence is that of Imidazole glycerol phosphate synthase subunit HisF from Leptospira interrogans serogroup Icterohaemorrhagiae serovar copenhageni (strain Fiocruz L1-130).